The sequence spans 419 residues: Multifunctional CCA protein (419 aa).

Residues Gly-8 and Arg-11 each coordinate ATP. CTP-binding residues include Gly-8 and Arg-11. The Mg(2+) site is built by Asp-21 and Asp-23. Arg-91, Arg-137, and Arg-140 together coordinate ATP. Residues Arg-91, Arg-137, and Arg-140 each contribute to the CTP site. Residues 228-334 (SFLHTMLVLQ…IKLFNKLDVW (107 aa)) enclose the HD domain.

Belongs to the tRNA nucleotidyltransferase/poly(A) polymerase family. Bacterial CCA-adding enzyme type 1 subfamily. Monomer. Can also form homodimers and oligomers. The cofactor is Mg(2+). Ni(2+) serves as cofactor.

It carries out the reaction a tRNA precursor + 2 CTP + ATP = a tRNA with a 3' CCA end + 3 diphosphate. The catalysed reaction is a tRNA with a 3' CCA end + 2 CTP + ATP = a tRNA with a 3' CCACCA end + 3 diphosphate. In terms of biological role, catalyzes the addition and repair of the essential 3'-terminal CCA sequence in tRNAs without using a nucleic acid template. Adds these three nucleotides in the order of C, C, and A to the tRNA nucleotide-73, using CTP and ATP as substrates and producing inorganic pyrophosphate. tRNA 3'-terminal CCA addition is required both for tRNA processing and repair. Also involved in tRNA surveillance by mediating tandem CCA addition to generate a CCACCA at the 3' terminus of unstable tRNAs. While stable tRNAs receive only 3'-terminal CCA, unstable tRNAs are marked with CCACCA and rapidly degraded. The sequence is that of Multifunctional CCA protein from Mannheimia succiniciproducens (strain KCTC 0769BP / MBEL55E).